The primary structure comprises 401 residues: Phosphoglycerate kinase (401 aa).

Substrate contacts are provided by residues 20–22 (DFN), arginine 35, 58–61 (HLGR), arginine 117, and arginine 154. ATP is bound by residues lysine 204, glycine 298, glutamate 329, and 358 to 361 (GGDS).

The protein belongs to the phosphoglycerate kinase family. Monomer.

It is found in the cytoplasm. It carries out the reaction (2R)-3-phosphoglycerate + ATP = (2R)-3-phospho-glyceroyl phosphate + ADP. The protein operates within carbohydrate degradation; glycolysis; pyruvate from D-glyceraldehyde 3-phosphate: step 2/5. This chain is Phosphoglycerate kinase, found in Bifidobacterium longum (strain DJO10A).